Here is a 402-residue protein sequence, read N- to C-terminus: Nicotinate phosphoribosyltransferase (402 aa).

His224 is subject to Phosphohistidine; by autocatalysis.

Belongs to the NAPRTase family. Transiently phosphorylated on a His residue during the reaction cycle. Phosphorylation strongly increases the affinity for substrates and increases the rate of nicotinate D-ribonucleotide production. Dephosphorylation regenerates the low-affinity form of the enzyme, leading to product release.

It carries out the reaction nicotinate + 5-phospho-alpha-D-ribose 1-diphosphate + ATP + H2O = nicotinate beta-D-ribonucleotide + ADP + phosphate + diphosphate. Its pathway is cofactor biosynthesis; NAD(+) biosynthesis; nicotinate D-ribonucleotide from nicotinate: step 1/1. In terms of biological role, catalyzes the synthesis of beta-nicotinate D-ribonucleotide from nicotinate and 5-phospho-D-ribose 1-phosphate at the expense of ATP. This chain is Nicotinate phosphoribosyltransferase, found in Neisseria meningitidis serogroup A / serotype 4A (strain DSM 15465 / Z2491).